The primary structure comprises 229 residues: Large ribosomal subunit protein uL1 (229 aa).

This sequence belongs to the universal ribosomal protein uL1 family. As to quaternary structure, part of the 50S ribosomal subunit.

Its function is as follows. Binds directly to 23S rRNA. The L1 stalk is quite mobile in the ribosome, and is involved in E site tRNA release. Protein L1 is also a translational repressor protein, it controls the translation of the L11 operon by binding to its mRNA. The sequence is that of Large ribosomal subunit protein uL1 from Rhodopseudomonas palustris (strain TIE-1).